The chain runs to 365 residues: Neuronal migration protein doublecortin (365 aa).

The interval 11-31 is disordered; that stretch reads RDKTSRNMRGSRMNGLPSPTH. Threonine 14 is subject to Phosphothreonine; by PKC. Serine 28 is modified (phosphoserine; by CDK5). Position 47 is a phosphoserine; by MARK1 and PKA (serine 47). 2 Doublecortin domains span residues 53 to 139 and 180 to 263; these read KKVR…VEYT and KLVT…AQDD. Position 70 is a phosphotyrosine; by ABL (tyrosine 70). Position 74 is a phosphoserine; by PKC (serine 74). Serine 90 is subject to Phosphoserine; by CK2. Phosphoserine; by PKC is present on serine 110. Serine 115 is subject to Phosphoserine; by CK2, MARK1 and PKA. Serine 265 carries the post-translational modification Phosphoserine; by CK2. Residues 275 to 365 are disordered; that stretch reads KGNPSATAGP…DDSDSLGDSM (91 aa). Serine 287 carries the phosphoserine; by CDK5 modification. At threonine 289 the chain carries Phosphothreonine; by CDK5. Serine 294 is subject to Phosphoserine; by PKC. Serine 297 carries the post-translational modification Phosphoserine; by CDK5. A Phosphoserine; by CK2 modification is found at serine 306. At serine 306 the chain carries Phosphoserine; by DYRK2. Positions 307-341 are enriched in polar residues; sequence PADSGNDQDANGTSSSQLSTPKSKQSPISTPTSPG. Threonine 326 carries the phosphothreonine; by CDK5 modification. A Phosphothreonine; by PKC and MAPK modification is found at threonine 326. Serine 332 is modified (phosphoserine; by CDK5). Phosphoserine; by MAPK is present on serine 332. Position 336 is a phosphothreonine; by MAPK (threonine 336). At serine 339 the chain carries Phosphoserine; by CDK5. Serine 339 carries the post-translational modification Phosphoserine; by MAPK. At serine 342 the chain carries Phosphoserine; by PKC. Residues serine 354 and serine 360 each carry the phosphoserine; by CK2 modification. The span at 356-365 shows a compositional bias: acidic residues; it reads DDSDSLGDSM.

As to quaternary structure, interacts with tubulin. Interacts with USP9X. Post-translationally, phosphorylation by MARK1, MARK2 and PKA regulates its ability to bind microtubules. Phosphorylation at Ser-265 and Ser-297 seems to occur only in neonatal brain, the levels falling precipitously by postnatal day 21. Ubiquitinated by MDM2, leading to its degradation by the proteasome. Ubiquitinated by MDM2 and subsequent degradation leads to reduce the dendritic spine density of olfactory bulb granule cells. As to expression, highly expressed in neuronal cells of fetal brain (in the majority of cells of the cortical plate, intermediate zone and ventricular zone), but not expressed in other fetal tissues. In the adult, highly expressed in the brain frontal lobe, but very low expression in other regions of brain, and not detected in heart, placenta, lung, liver, skeletal muscles, kidney and pancreas.

Its subcellular location is the cytoplasm. The protein resides in the cell projection. The protein localises to the neuron projection. In terms of biological role, microtubule-associated protein required for initial steps of neuronal dispersion and cortex lamination during cerebral cortex development. May act by competing with the putative neuronal protein kinase DCLK1 in binding to a target protein. May in that way participate in a signaling pathway that is crucial for neuronal interaction before and during migration, possibly as part of a calcium ion-dependent signal transduction pathway. May be part with PAFAH1B1/LIS-1 of overlapping, but distinct, signaling pathways that promote neuronal migration. The chain is Neuronal migration protein doublecortin (DCX) from Homo sapiens (Human).